We begin with the raw amino-acid sequence, 369 residues long: 3-dehydroquinate synthase (369 aa).

Residues 70–75 (DAEDGK), 104–108 (GAATD), 128–129 (TT), Lys-141, Lys-150, and 168–171 (TLET) each bind NAD(+). The Zn(2+) site is built by Glu-183, His-246, and His-262.

It belongs to the sugar phosphate cyclases superfamily. Dehydroquinate synthase family. Requires Co(2+) as cofactor. Zn(2+) is required as a cofactor. NAD(+) serves as cofactor.

The protein localises to the cytoplasm. The enzyme catalyses 7-phospho-2-dehydro-3-deoxy-D-arabino-heptonate = 3-dehydroquinate + phosphate. It participates in metabolic intermediate biosynthesis; chorismate biosynthesis; chorismate from D-erythrose 4-phosphate and phosphoenolpyruvate: step 2/7. Catalyzes the conversion of 3-deoxy-D-arabino-heptulosonate 7-phosphate (DAHP) to dehydroquinate (DHQ). The polypeptide is 3-dehydroquinate synthase (Rhodococcus erythropolis (strain PR4 / NBRC 100887)).